Reading from the N-terminus, the 225-residue chain is Orotate phosphoribosyltransferase (225 aa).

Residue Lys29 coordinates 5-phospho-alpha-D-ribose 1-diphosphate. Position 37 to 38 (37 to 38) interacts with orotate; it reads FF. 5-phospho-alpha-D-ribose 1-diphosphate contacts are provided by residues 75–76, Arg105, Lys106, Lys109, His111, and 130–138; these read YK and DDVITAGTS. Positions 134 and 162 each coordinate orotate.

Belongs to the purine/pyrimidine phosphoribosyltransferase family. PyrE subfamily. In terms of assembly, homodimer. Mg(2+) is required as a cofactor.

The enzyme catalyses orotidine 5'-phosphate + diphosphate = orotate + 5-phospho-alpha-D-ribose 1-diphosphate. The protein operates within pyrimidine metabolism; UMP biosynthesis via de novo pathway; UMP from orotate: step 1/2. Functionally, catalyzes the transfer of a ribosyl phosphate group from 5-phosphoribose 1-diphosphate to orotate, leading to the formation of orotidine monophosphate (OMP). The protein is Orotate phosphoribosyltransferase of Bordetella petrii (strain ATCC BAA-461 / DSM 12804 / CCUG 43448).